Consider the following 358-residue polypeptide: Ferredoxin--NADP reductase (358 aa).

Residues D38, Q46, Y51, V91, F126, D301, and T341 each contribute to the FAD site.

It belongs to the ferredoxin--NADP reductase type 2 family. As to quaternary structure, homodimer. Requires FAD as cofactor.

The enzyme catalyses 2 reduced [2Fe-2S]-[ferredoxin] + NADP(+) + H(+) = 2 oxidized [2Fe-2S]-[ferredoxin] + NADPH. This is Ferredoxin--NADP reductase from Paracidovorax citrulli (strain AAC00-1) (Acidovorax citrulli).